The chain runs to 45 residues: Natriuretic peptide OsNP-d (45 aa).

Positions 1–5 (PAAGL) are excised as a propeptide. An intrachain disulfide couples Cys-14 to Cys-30.

The protein belongs to the natriuretic peptide family. In terms of tissue distribution, expressed by the venom gland.

It localises to the secreted. Its function is as follows. Snake venom natriuretic peptide that targets both NPR1 and NPR2. Exhibits hypotensive and vasodepressor activities. The protein is Natriuretic peptide OsNP-d of Oxyuranus scutellatus scutellatus (Australian taipan).